The primary structure comprises 204 residues: Urease accessory protein UreG (204 aa).

12-19 lines the GTP pocket; that stretch reads GPVGSGKT.

The protein belongs to the SIMIBI class G3E GTPase family. UreG subfamily. Homodimer. UreD, UreF and UreG form a complex that acts as a GTP-hydrolysis-dependent molecular chaperone, activating the urease apoprotein by helping to assemble the nickel containing metallocenter of UreC. The UreE protein probably delivers the nickel.

It is found in the cytoplasm. In terms of biological role, facilitates the functional incorporation of the urease nickel metallocenter. This process requires GTP hydrolysis, probably effectuated by UreG. This Azotobacter vinelandii (strain DJ / ATCC BAA-1303) protein is Urease accessory protein UreG.